A 390-amino-acid chain; its full sequence is Dual-specificity RNA methyltransferase RlmN (390 aa).

Residue E110 is the Proton acceptor of the active site. Residues 116–355 (EADRATLCVS…VIIRKTRGDD (240 aa)) enclose the Radical SAM core domain. A disulfide bridge connects residues C123 and C360. 3 residues coordinate [4Fe-4S] cluster: C130, C134, and C137. Residues 184–185 (GE), S216, 238–240 (SLH), and N317 contribute to the S-adenosyl-L-methionine site. The S-methylcysteine intermediate role is filled by C360.

It belongs to the radical SAM superfamily. RlmN family. [4Fe-4S] cluster is required as a cofactor.

Its subcellular location is the cytoplasm. It carries out the reaction adenosine(2503) in 23S rRNA + 2 reduced [2Fe-2S]-[ferredoxin] + 2 S-adenosyl-L-methionine = 2-methyladenosine(2503) in 23S rRNA + 5'-deoxyadenosine + L-methionine + 2 oxidized [2Fe-2S]-[ferredoxin] + S-adenosyl-L-homocysteine. It catalyses the reaction adenosine(37) in tRNA + 2 reduced [2Fe-2S]-[ferredoxin] + 2 S-adenosyl-L-methionine = 2-methyladenosine(37) in tRNA + 5'-deoxyadenosine + L-methionine + 2 oxidized [2Fe-2S]-[ferredoxin] + S-adenosyl-L-homocysteine. Functionally, specifically methylates position 2 of adenine 2503 in 23S rRNA and position 2 of adenine 37 in tRNAs. m2A2503 modification seems to play a crucial role in the proofreading step occurring at the peptidyl transferase center and thus would serve to optimize ribosomal fidelity. The chain is Dual-specificity RNA methyltransferase RlmN from Haemophilus influenzae (strain ATCC 51907 / DSM 11121 / KW20 / Rd).